Reading from the N-terminus, the 518-residue chain is Metalloprotease TIKI2 (518 aa).

An N-terminal signal peptide occupies residues 1–22; that stretch reads MNCQSGLRWLVTLCAFFQVGSA. At 23 to 499 the chain is on the extracellular side; sequence RDTHESTRQC…SALDSAAPNP (477 aa). N-linked (GlcNAc...) asparagine glycosylation is found at asparagine 224, asparagine 233, asparagine 282, asparagine 325, and asparagine 340. The helical transmembrane segment at 500 to 517 threads the bilayer; that stretch reads TYALTCFLACLISQLLFA. A topological domain (cytoplasmic) is located at residue serine 518.

Belongs to the TIKI family. It depends on Mn(2+) as a cofactor. Requires Co(2+) as cofactor.

It is found in the cell membrane. Its function is as follows. Metalloprotease that acts as a negative regulator of the Wnt signaling pathway by mediating the cleavage of the N-terminal residues of a subset of Wnt proteins. Following cleavage, Wnt proteins become oxidized and form large disulfide-bond oligomers, leading to their inactivation. The sequence is that of Metalloprotease TIKI2 (trabd2b) from Danio rerio (Zebrafish).